Reading from the N-terminus, the 526-residue chain is Probable feruloyl esterase B-1 (526 aa).

Positions 1 to 19 (MPSLRRLLPFLAAGSAALA) are cleaved as a signal peptide. Intrachain disulfides connect Cys28-Cys75 and Cys63-Cys114. 4 N-linked (GlcNAc...) asparagine glycosylation sites follow: Asn53, Asn85, Asn98, and Asn138. 3 disulfide bridges follow: Cys187/Cys441, Cys256/Cys273, and Cys282/Cys291. Ser188 serves as the catalytic Acyl-ester intermediate. Residue Asn246 is glycosylated (N-linked (GlcNAc...) asparagine). The Ca(2+) site is built by Asp257, Asp260, Ala262, Asp264, and Ile266. Residues Asn287 and Asn311 are each glycosylated (N-linked (GlcNAc...) asparagine). Catalysis depends on charge relay system residues Asp400 and His440. N-linked (GlcNAc...) asparagine glycans are attached at residues Asn490 and Asn516. A disulfide bond links Cys503 and Cys525.

The protein belongs to the tannase family.

It is found in the secreted. The enzyme catalyses feruloyl-polysaccharide + H2O = ferulate + polysaccharide.. Its function is as follows. Involved in degradation of plant cell walls. Hydrolyzes the feruloyl-arabinose ester bond in arabinoxylans as well as the feruloyl-galactose and feruloyl-arabinose ester bonds in pectin. This Aspergillus flavus (strain ATCC 200026 / FGSC A1120 / IAM 13836 / NRRL 3357 / JCM 12722 / SRRC 167) protein is Probable feruloyl esterase B-1 (faeB-1).